Here is a 262-residue protein sequence, read N- to C-terminus: Tryptophan synthase alpha chain (262 aa).

Catalysis depends on proton acceptor residues Glu-49 and Asp-60.

Belongs to the TrpA family. As to quaternary structure, tetramer of two alpha and two beta chains.

It carries out the reaction (1S,2R)-1-C-(indol-3-yl)glycerol 3-phosphate + L-serine = D-glyceraldehyde 3-phosphate + L-tryptophan + H2O. Its pathway is amino-acid biosynthesis; L-tryptophan biosynthesis; L-tryptophan from chorismate: step 5/5. In terms of biological role, the alpha subunit is responsible for the aldol cleavage of indoleglycerol phosphate to indole and glyceraldehyde 3-phosphate. This chain is Tryptophan synthase alpha chain, found in Caldanaerobacter subterraneus subsp. tengcongensis (strain DSM 15242 / JCM 11007 / NBRC 100824 / MB4) (Thermoanaerobacter tengcongensis).